Here is a 62-residue protein sequence, read N- to C-terminus: Temporin-HN1 (62 aa).

A signal peptide spans Met1 to Ser22. Residues Glu23–Glu44 constitute a propeptide that is removed on maturation. Leu60 carries the post-translational modification Leucine amide.

In terms of tissue distribution, expressed by the skin glands.

It localises to the secreted. Has antimicrobial activity against some Gram-positive bacteria and fungi but has no activity against a range of Gram-negative bacteria except P.faecalis. Active against the Gram-positive bacteria S.aureus ATCC 25923 (MIC=37.5 uM), S.carnosus KHS (MIC=37.5 uM), B.licheniformis X39 (MIC=19 uM), R.rhodochrous X15 (MIC=4.8 uM), is virtually inactive against E.faecalis 981 (MIC=150 uM) and inactive against E.faecium 091299. Has some antimicrobial activity against the Gram-negative bacterium P.faecalis X29 (MIC=75 uM) and is inactive against E.coli, P.aeruginosa and S.typhi. Has antifungal activity against C.albicans ATCC 2002 (MIC=19 uM) and lower activity against the slime mold 090223 (MIC=75 uM). Has low hemolytic activity against human erythrocytes (LC(50)=75 uM). The sequence is that of Temporin-HN1 from Odorrana hainanensis (Odor frog).